Here is a 647-residue protein sequence, read N- to C-terminus: DNA mismatch repair protein MutL (647 aa).

The segment at glutamine 346–proline 378 is disordered.

The protein belongs to the DNA mismatch repair MutL/HexB family.

Functionally, this protein is involved in the repair of mismatches in DNA. It is required for dam-dependent methyl-directed DNA mismatch repair. May act as a 'molecular matchmaker', a protein that promotes the formation of a stable complex between two or more DNA-binding proteins in an ATP-dependent manner without itself being part of a final effector complex. The protein is DNA mismatch repair protein MutL of Limosilactobacillus fermentum (strain NBRC 3956 / LMG 18251) (Lactobacillus fermentum).